The chain runs to 177 residues: Large ribosomal subunit protein uL6 (177 aa).

This sequence belongs to the universal ribosomal protein uL6 family. Part of the 50S ribosomal subunit.

This protein binds to the 23S rRNA, and is important in its secondary structure. It is located near the subunit interface in the base of the L7/L12 stalk, and near the tRNA binding site of the peptidyltransferase center. The polypeptide is Large ribosomal subunit protein uL6 (Bartonella quintana (strain Toulouse) (Rochalimaea quintana)).